The sequence spans 61 residues: Small ribosomal subunit protein eS30A (61 aa).

Positions 1–36 (MGKVHGSLARAGKVKSQTPKVEKQEKPKQPKGRAYK) are disordered.

The protein belongs to the eukaryotic ribosomal protein eS30 family. As to quaternary structure, component of the small ribosomal subunit (SSU). Mature yeast ribosomes consist of a small (40S) and a large (60S) subunit. The 40S small subunit contains 1 molecule of ribosomal RNA (18S rRNA) and at least 33 different proteins. The large 60S subunit contains 3 rRNA molecules (25S, 5.8S and 5S rRNA) and at least 46 different proteins.

Its subcellular location is the cytoplasm. The protein localises to the nucleus. Its function is as follows. Component of the ribosome, a large ribonucleoprotein complex responsible for the synthesis of proteins in the cell. The small ribosomal subunit (SSU) binds messenger RNAs (mRNAs) and translates the encoded message by selecting cognate aminoacyl-transfer RNA (tRNA) molecules. The large subunit (LSU) contains the ribosomal catalytic site termed the peptidyl transferase center (PTC), which catalyzes the formation of peptide bonds, thereby polymerizing the amino acids delivered by tRNAs into a polypeptide chain. The nascent polypeptides leave the ribosome through a tunnel in the LSU and interact with protein factors that function in enzymatic processing, targeting, and the membrane insertion of nascent chains at the exit of the ribosomal tunnel. The protein is Small ribosomal subunit protein eS30A (rps3001) of Schizosaccharomyces pombe (strain 972 / ATCC 24843) (Fission yeast).